A 261-amino-acid polypeptide reads, in one-letter code: Indole-3-glycerol phosphate synthase (261 aa).

Belongs to the TrpC family.

The catalysed reaction is 1-(2-carboxyphenylamino)-1-deoxy-D-ribulose 5-phosphate + H(+) = (1S,2R)-1-C-(indol-3-yl)glycerol 3-phosphate + CO2 + H2O. The protein operates within amino-acid biosynthesis; L-tryptophan biosynthesis; L-tryptophan from chorismate: step 4/5. This chain is Indole-3-glycerol phosphate synthase, found in Oceanobacillus iheyensis (strain DSM 14371 / CIP 107618 / JCM 11309 / KCTC 3954 / HTE831).